Consider the following 249-residue polypeptide: Small ribosomal subunit protein uS5 (249 aa).

The segment covering 1-14 (MSAEAPKRQFGDRR) has biased composition (basic and acidic residues). Positions 1–29 (MSAEAPKRQFGDRRRGGRRGGRRDGEEKG) are disordered. The region spanning 71-134 (LKDDVMKIRS…VIAKLSIIPI (64 aa)) is the S5 DRBM domain.

The protein belongs to the universal ribosomal protein uS5 family. In terms of assembly, component of the small ribosomal subunit. Mature ribosomes consist of a small (40S) and a large (60S) subunit. The 40S subunit contains about 32 different proteins and 1 molecule of RNA (18S). The 60S subunit contains 45 different proteins and 3 molecules of RNA (25S, 5.8S and 5S).

It is found in the cytoplasm. In terms of biological role, component of the ribosome, a large ribonucleoprotein complex responsible for the synthesis of proteins in the cell. The small ribosomal subunit (SSU) binds messenger RNAs (mRNAs) and translates the encoded message by selecting cognate aminoacyl-transfer RNA (tRNA) molecules. The large subunit (LSU) contains the ribosomal catalytic site termed the peptidyl transferase center (PTC), which catalyzes the formation of peptide bonds, thereby polymerizing the amino acids delivered by tRNAs into a polypeptide chain. The nascent polypeptides leave the ribosome through a tunnel in the LSU and interact with protein factors that function in enzymatic processing, targeting, and the membrane insertion of nascent chains at the exit of the ribosomal tunnel. RPS2 is important for the assembly and function of the 40S ribosomal subunitand is nvolved in nucleolar processing of pre-18S ribosomal RNA and ribosome assembly. The chain is Small ribosomal subunit protein uS5 (RPS21) from Candida albicans (strain SC5314 / ATCC MYA-2876) (Yeast).